The sequence spans 184 residues: Myeloproliferative leukemia protein (184 aa).

The short motif at 26–30 (WSAWS) is the WSXWS motif element. A helical transmembrane segment spans residues 44–64 (ITLVTALLLVLSLSALLGLLL). The short motif at 80 to 88 (LWPSLPDLH) is the Box 1 motif element.

The protein belongs to the type I cytokine receptor family. Type 1 subfamily.

The protein resides in the membrane. Functionally, truncated form of the receptor for thrombopoietin. This chain is Myeloproliferative leukemia protein (V-MPL), found in Mus musculus (Mouse).